The following is a 660-amino-acid chain: Bifunctional polymyxin resistance protein ArnA (660 aa).

The segment at 1–304 (MKAVIFAYHD…TLGLVAGARL (304 aa)) is formyltransferase ArnAFT. Catalysis depends on histidine 104, which acts as the Proton donor; for formyltransferase activity. (6R)-10-formyltetrahydrofolate is bound by residues arginine 114 and 136 to 140 (VKRAD). A dehydrogenase ArnADH region spans residues 314 to 660 (RRIRVLILGV…RSVDVAERAS (347 aa)). NAD(+) is bound by residues aspartate 347 and 368–369 (DI). UDP-alpha-D-glucuronate-binding positions include alanine 393, tyrosine 398, and 432-433 (TS). The active-site Proton acceptor; for decarboxylase activity is glutamate 434. UDP-alpha-D-glucuronate is bound by residues arginine 460, asparagine 492, 526-535 (KLIDGGQQKR), and tyrosine 613. Catalysis depends on arginine 619, which acts as the Proton donor; for decarboxylase activity.

The protein in the N-terminal section; belongs to the Fmt family. UDP-L-Ara4N formyltransferase subfamily. It in the C-terminal section; belongs to the NAD(P)-dependent epimerase/dehydratase family. UDP-glucuronic acid decarboxylase subfamily. Homohexamer, formed by a dimer of trimers.

It catalyses the reaction UDP-alpha-D-glucuronate + NAD(+) = UDP-beta-L-threo-pentopyranos-4-ulose + CO2 + NADH. The enzyme catalyses UDP-4-amino-4-deoxy-beta-L-arabinose + (6R)-10-formyltetrahydrofolate = UDP-4-deoxy-4-formamido-beta-L-arabinose + (6S)-5,6,7,8-tetrahydrofolate + H(+). The protein operates within nucleotide-sugar biosynthesis; UDP-4-deoxy-4-formamido-beta-L-arabinose biosynthesis; UDP-4-deoxy-4-formamido-beta-L-arabinose from UDP-alpha-D-glucuronate: step 1/3. It functions in the pathway nucleotide-sugar biosynthesis; UDP-4-deoxy-4-formamido-beta-L-arabinose biosynthesis; UDP-4-deoxy-4-formamido-beta-L-arabinose from UDP-alpha-D-glucuronate: step 3/3. Its pathway is bacterial outer membrane biogenesis; lipopolysaccharide biosynthesis. Its function is as follows. Bifunctional enzyme that catalyzes the oxidative decarboxylation of UDP-glucuronic acid (UDP-GlcUA) to UDP-4-keto-arabinose (UDP-Ara4O) and the addition of a formyl group to UDP-4-amino-4-deoxy-L-arabinose (UDP-L-Ara4N) to form UDP-L-4-formamido-arabinose (UDP-L-Ara4FN). The modified arabinose is attached to lipid A and is required for resistance to polymyxin and cationic antimicrobial peptides. The protein is Bifunctional polymyxin resistance protein ArnA of Salmonella heidelberg (strain SL476).